The sequence spans 131 residues: Histone H2B.2 (131 aa).

Basic and acidic residues predominate over residues 1–20; it reads MAPPKAEKKPASKAPAEKKP. The segment at 1 to 39 is disordered; that stretch reads MAPPKAEKKPASKAPAEKKPAAKKTASSTDAKKRTKTRK. Residues lysine 8 and lysine 9 each carry the N6-acetyllysine; alternate modification. Residues lysine 8 and lysine 9 each participate in a glycyl lysine isopeptide (Lys-Gly) (interchain with G-Cter in SUMO); alternate cross-link. At serine 12 the chain carries Phosphoserine. Lysine 13 is subject to N6-acetyllysine. Lysine 18 bears the N6-acetyllysine; alternate mark. Lysine 18 participates in a covalent cross-link: Glycyl lysine isopeptide (Lys-Gly) (interchain with G-Cter in SUMO); alternate. Lysine 19 is covalently cross-linked (Glycyl lysine isopeptide (Lys-Gly) (interchain with G-Cter in SUMO)). Residue lysine 125 forms a Glycyl lysine isopeptide (Lys-Gly) (interchain with G-Cter in ubiquitin) linkage.

It belongs to the histone H2B family. In terms of assembly, the nucleosome is a histone octamer containing two molecules each of H2A, H2B, H3 and H4 assembled in one H3-H4 heterotetramer and two H2A-H2B heterodimers. The octamer wraps approximately 147 bp of DNA. Post-translationally, monoubiquitinated to form H2BK123ub1. H2BK123ub1 gives a specific tag for epigenetic transcriptional activation and is also prerequisite for H3K4me and H3K79me formation. H2BK123ub1 also modulates the formation of double-strand breaks during meiosis and is a prerequisite for DNA-damage checkpoint activation. In terms of processing, phosphorylated by STE20 to form H2BS10ph during progression through meiotic prophase. May be correlated with chromosome condensation. Acetylated by GCN5 to form H2BK11ac and H2BK16ac. H2BK16ac can also be formed by ESA1. Acetylation of N-terminal lysines and particularly formation of H2BK11acK16ac has a positive effect on transcription. Post-translationally, sumoylation to form H2BK6su or H2BK7su, and probably also H2BK16su or H2BK17su, occurs preferentially near the telomeres and represses gene transcription.

The protein resides in the nucleus. It is found in the chromosome. Functionally, core component of nucleosome. Nucleosomes wrap and compact DNA into chromatin, limiting DNA accessibility to the cellular machineries which require DNA as a template. Histones thereby play a central role in transcription regulation, DNA repair, DNA replication and chromosomal stability. DNA accessibility is regulated via a complex set of post-translational modifications of histones, also called histone code, and nucleosome remodeling. In Scheffersomyces stipitis (strain ATCC 58785 / CBS 6054 / NBRC 10063 / NRRL Y-11545) (Yeast), this protein is Histone H2B.2 (HTB2).